A 37-amino-acid chain; its full sequence is Large ribosomal subunit protein bL36 (37 aa).

This sequence belongs to the bacterial ribosomal protein bL36 family.

This chain is Large ribosomal subunit protein bL36 (rpmJ), found in Fusobacterium nucleatum subsp. nucleatum (strain ATCC 25586 / DSM 15643 / BCRC 10681 / CIP 101130 / JCM 8532 / KCTC 2640 / LMG 13131 / VPI 4355).